The chain runs to 641 residues: ATP-dependent zinc metalloprotease FtsH 2 (641 aa).

Residues 1–100 (MLAYYVSVNQ…IDVKVIHNFW (100 aa)) are Periplasmic-facing. Residues 101–121 (GQAFLSVLPFLLFILALYFLF) form a helical membrane-spanning segment. The Cytoplasmic segment spans residues 122–641 (RQQIRMAGRG…LLPGLEGAPA (520 aa)). 193 to 200 (GPPGTGKT) contributes to the ATP binding site. His415 is a binding site for Zn(2+). Residue Glu416 is part of the active site. Zn(2+) contacts are provided by His419 and Asp491. The tract at residues 593-641 (KTGKMTNPPSKNSSPVSNGGEASSTKSPARQEETTKDGGLLPGLEGAPA) is disordered. Low complexity-rich tracts occupy residues 599–610 (NPPSKNSSPVSN) and 630–641 (GGLLPGLEGAPA).

In the central section; belongs to the AAA ATPase family. This sequence in the C-terminal section; belongs to the peptidase M41 family. Homohexamer. Requires Zn(2+) as cofactor.

It localises to the cell inner membrane. Its function is as follows. Acts as a processive, ATP-dependent zinc metallopeptidase for both cytoplasmic and membrane proteins. Plays a role in the quality control of integral membrane proteins. The polypeptide is ATP-dependent zinc metalloprotease FtsH 2 (Methylacidiphilum infernorum (isolate V4) (Methylokorus infernorum (strain V4))).